We begin with the raw amino-acid sequence, 372 residues long: Delta-type opioid receptor (372 aa).

The Extracellular segment spans residues 1–47 (MEPAPSAGAELQPPLFANASDAYPSACPSAGANASGPPGARSASSLA). Residues Asn18 and Asn33 are each glycosylated (N-linked (GlcNAc...) asparagine). The helical transmembrane segment at 48-75 (LAIAITALYSAVCAVGLLGNVLVMFGIV) threads the bilayer. At 76–85 (RYTKMKTATN) the chain is on the cytoplasmic side. A helical membrane pass occupies residues 86 to 110 (IYIFNLALADALATSTLPFQSAKYL). The Extracellular portion of the chain corresponds to 111–122 (METWPFGELLCK). The cysteines at positions 121 and 198 are disulfide-linked. A helical membrane pass occupies residues 123-144 (AVLSIDYYNMFTSIFTLTMMSV). Residues 145–163 (DRYIAVCHPVKALDFRTPA) are Cytoplasmic-facing. The helical transmembrane segment at 164–186 (KAKLINICIWVLASGVGVPIMVM) threads the bilayer. Residues 187 to 206 (AVTRPRDGAVVCMLQFPSPS) lie on the Extracellular side of the membrane. The helical transmembrane segment at 207–238 (WYWDTVTKICVFLFAFVVPILIITVCYGLMLL) threads the bilayer. The Cytoplasmic portion of the chain corresponds to 239–261 (RLRSVRLLSGSKEKDRSLRRITR). Residues 262-284 (MVLVVVGAFVVCWAPIHIFVIVW) traverse the membrane as a helical segment. Over 285-299 (TLVDIDRRDPLVVAA) the chain is Extracellular. A helical transmembrane segment spans residues 300 to 321 (LHLCIALGYANSSLNPVLYAFL). The Cytoplasmic segment spans residues 322–372 (DENFKRCFRQLCRKPCGRPDPSSFSRAREATARERVTACTPSDGPGGGAAA). Cys333 carries S-palmitoyl cysteine lipidation. The tract at residues 340–372 (PDPSSFSRAREATARERVTACTPSDGPGGGAAA) is disordered. The span at 347 to 357 (RAREATARERV) shows a compositional bias: basic and acidic residues.

It belongs to the G-protein coupled receptor 1 family. As to quaternary structure, may form homooligomers. Forms a heterodimer with OPRM1. Interacts with GPRASP1. Interacts with RTP4; the interaction promotes cell surface localization of the OPRD1-OPRM1 heterodimer. In terms of processing, N-glycosylated. Ubiquitinated. A basal ubiquitination seems not to be related to degradation. Ubiquitination is increased upon formation of OPRM1:OPRD1 oligomers leading to proteasomal degradation; the ubiquitination is diminished by RTP4. As to expression, detected in oocytes (at protein level). Detected in brain cortex, hypothalamus, hippocampus and olfactory bulb. Detected in oocytes.

The protein resides in the cell membrane. Functionally, G-protein coupled receptor that functions as a receptor for endogenous enkephalins and for a subset of other opioids. Ligand binding causes a conformation change that triggers signaling via guanine nucleotide-binding proteins (G proteins) and modulates the activity of down-stream effectors, such as adenylate cyclase. Signaling leads to the inhibition of adenylate cyclase activity. Inhibits neurotransmitter release by reducing calcium ion currents and increasing potassium ion conductance. Plays a role in the perception of pain and in opiate-mediated analgesia. Plays a role in developing analgesic tolerance to morphine. The polypeptide is Delta-type opioid receptor (OPRD1) (Homo sapiens (Human)).